The chain runs to 30 residues: Putative cytochrome bd-II ubiquinol oxidase subunit AppX (30 aa).

A helical membrane pass occupies residues 4–24; sequence LLWFVGILLMCSLSTLVLVWL.

Belongs to the cytochrome ubiquinol oxidase subunit X family. Able to interact with CydA and CydB upon overexpression.

It is found in the cell inner membrane. In terms of biological role, might be part of cytochrome bd-II oxidase (appB and appC). Able to restore reductant resistance to a cydX deletion mutant upon overexpression. CydX and this protein may have some functional overlap. This Escherichia coli (strain K12) protein is Putative cytochrome bd-II ubiquinol oxidase subunit AppX (appX).